We begin with the raw amino-acid sequence, 207 residues long: Protein Nef (207 aa).

Residue Gly2 is the site of N-myristoyl glycine; by host attachment. Position 6 is a phosphoserine; by host (Ser6). The segment at 62 to 66 is acidic; interacts with host PACS1 and PACS2; stabilizes the interaction of NEF/MHC-I with host AP1M1; necessary for MHC-I internalization; that stretch reads EEDSE. Residues 70-79 are SH3-binding; interaction with Src family tyrosine kinases; it reads PVRPQVPLRP. The PxxP; stabilizes the interaction of NEF/MHC-I with host AP1M1; necessary for MHC-I internalization motif lies at 73 to 76; the sequence is PQVP. The interval 109 to 125 is mediates dimerization, Nef-PTE1 interaction; that stretch reads EILDLWVYNTQGYFPDW. Residues 149–181 are binding to ATP6V1H; it reads MDPAEVEEANKGENNSLLHPICQHGMEDEDREV. The short motif at 165–166 is the Dileucine internalization motif; necessary for CD4 internalization element; sequence LL. A Diacidic; necessary for CD4 internalization motif is present at residues 175 to 176; that stretch reads ED.

Belongs to the lentivirus primate group Nef protein family. As to quaternary structure, monomer; cytosolic form. Homodimer; membrane bound form. Interacts with Nef associated p21-activated kinase (PAK2); this interaction activates PAK2. Associates with the Nef-MHC-I-AP1 complex; this complex is required for MHC-I internalization. Interacts (via C-terminus) with host PI3-kinase. Interacts with host PACS1; this interaction seems to be weak. Interacts with host PACS2. Interacts with host LCK and MAPK3; these interactions inhibit the kinase activity of the latter. Interacts with host ATP6V1H; this interaction may play a role in CD4 endocytosis. Associates with the CD4-Nef-AP2 complex; this complex is required for CD4 internalization. Interacts with host AP2 subunit alpha and AP2 subunit sigma2. Interacts with TCR-zeta chain; this interaction up-regulates the Fas ligand (FasL) surface expression. Interacts with host HCK, LYN, and SRC; these interactions activate the Src family kinases. Interacts with MAP3K5; this interaction inhibits the Fas and TNFR-mediated death signals. Interacts with beta-COP and PTE1. Interacts with human RACK1; this increases Nef phosphorylation by PKC. Interacts with TP53; this interaction decreases the half-life of TP53, protecting the infected cell against p53-mediated apoptosis. Post-translationally, the virion-associated Nef proteins are cleaved by the viral protease to release the soluble C-terminal core protein. Nef is probably cleaved concomitantly with viral structural proteins on maturation of virus particles. In terms of processing, myristoylated. Phosphorylated on serine residues, probably by host PKCdelta and theta.

It is found in the host cell membrane. The protein resides in the virion. It localises to the secreted. Its subcellular location is the host Golgi apparatus membrane. Its function is as follows. Factor of infectivity and pathogenicity, required for optimal virus replication. Alters numerous pathways of T-lymphocyte function and down-regulates immunity surface molecules in order to evade host defense and increase viral infectivity. Alters the functionality of other immunity cells, like dendritic cells, monocytes/macrophages and NK cells. In terms of biological role, in infected CD4(+) T-lymphocytes, down-regulates the surface MHC-I, mature MHC-II, CD4, CD28, CCR5 and CXCR4 molecules. Mediates internalization and degradation of host CD4 through the interaction of with the cytoplasmic tail of CD4, the recruitment of AP-2 (clathrin adapter protein complex 2), internalization through clathrin coated pits, and subsequent transport to endosomes and lysosomes for degradation. Diverts host MHC-I molecules to the trans-Golgi network-associated endosomal compartments by an endocytic pathway to finally target them for degradation. MHC-I down-regulation may involve AP-1 (clathrin adapter protein complex 1) or possibly Src family kinase-ZAP70/Syk-PI3K cascade recruited by PACS2. In consequence infected cells are masked for immune recognition by cytotoxic T-lymphocytes. Decreasing the number of immune receptors also prevents reinfection by more HIV particles (superinfection). Down-regulates host SERINC3 and SERINC5 thereby excluding these proteins from the viral particles. Virion infectivity is drastically higher when SERINC3 or SERINC5 are excluded from the viral envelope, because these host antiviral proteins impair the membrane fusion event necessary for subsequent virion penetration. Functionally, bypasses host T-cell signaling by inducing a transcriptional program nearly identical to that of anti-CD3 cell activation. Interaction with TCR-zeta chain up-regulates the Fas ligand (FasL). Increasing surface FasL molecules and decreasing surface MHC-I molecules on infected CD4(+) cells send attacking cytotoxic CD8+ T-lymphocytes into apoptosis. Plays a role in optimizing the host cell environment for viral replication without causing cell death by apoptosis. Protects the infected cells from apoptosis in order to keep them alive until the next virus generation is ready to strike. Inhibits the Fas and TNFR-mediated death signals by blocking MAP3K5/ASK1. Decreases the half-life of TP53, protecting the infected cell against p53-mediated apoptosis. Inhibits the apoptotic signals regulated by the Bcl-2 family proteins through the formation of a Nef/PI3-kinase/PAK2 complex that leads to activation of PAK2 and induces phosphorylation of host BAD. Its function is as follows. Extracellular Nef protein targets CD4(+) T-lymphocytes for apoptosis by interacting with CXCR4 surface receptors. This is Protein Nef from Homo sapiens (Human).